A 487-amino-acid chain; its full sequence is Probable cytochrome P450 516A1 (487 aa).

Residues 1-21 (MIILLLSIIIFILYIVKIFKN) form a helical membrane-spanning segment. Residue cysteine 434 coordinates heme.

It belongs to the cytochrome P450 family. Heme serves as cofactor.

It is found in the membrane. In Dictyostelium discoideum (Social amoeba), this protein is Probable cytochrome P450 516A1 (cyp516A1).